The following is a 724-amino-acid chain: Catalase-peroxidase (724 aa).

A cross-link (tryptophyl-tyrosyl-methioninium (Trp-Tyr) (with M-252)) is located at residues 98 to 226 (WHAAGTYRIA…LAAVMMGLIY (129 aa)). The active-site Proton acceptor is the H99. Residues 226-252 (YVNPEGVDGNPDPLKTAHDIRVTFERM) constitute a cross-link (tryptophyl-tyrosyl-methioninium (Tyr-Met) (with W-98)). H267 is a heme b binding site.

It belongs to the peroxidase family. Peroxidase/catalase subfamily. Homodimer or homotetramer. Heme b serves as cofactor. In terms of processing, formation of the three residue Trp-Tyr-Met cross-link is important for the catalase, but not the peroxidase activity of the enzyme.

The enzyme catalyses H2O2 + AH2 = A + 2 H2O. It catalyses the reaction 2 H2O2 = O2 + 2 H2O. Functionally, bifunctional enzyme with both catalase and broad-spectrum peroxidase activity. This is Catalase-peroxidase from Psychromonas ingrahamii (strain DSM 17664 / CCUG 51855 / 37).